The chain runs to 148 residues: Ubiquitin-conjugating enzyme E2 5B (148 aa).

The UBC core domain maps to 1-147; that stretch reads MASKRILKEL…ARSWTQKYAM (147 aa). Cysteine 85 (glycyl thioester intermediate) is an active-site residue.

It belongs to the ubiquitin-conjugating enzyme family.

It carries out the reaction S-ubiquitinyl-[E1 ubiquitin-activating enzyme]-L-cysteine + [E2 ubiquitin-conjugating enzyme]-L-cysteine = [E1 ubiquitin-activating enzyme]-L-cysteine + S-ubiquitinyl-[E2 ubiquitin-conjugating enzyme]-L-cysteine.. It functions in the pathway protein modification; protein ubiquitination. Its function is as follows. E2 conjugating enzyme that associates with the E3 ubiquitin-protein ligase EL5 to mediate ubiquitination of target proteins. The polypeptide is Ubiquitin-conjugating enzyme E2 5B (UBC5B) (Oryza sativa subsp. japonica (Rice)).